The chain runs to 402 residues: Nicotinate phosphoribosyltransferase (402 aa).

His-221 carries the phosphohistidine; by autocatalysis modification.

It belongs to the NAPRTase family. Post-translationally, transiently phosphorylated on a His residue during the reaction cycle. Phosphorylation strongly increases the affinity for substrates and increases the rate of nicotinate D-ribonucleotide production. Dephosphorylation regenerates the low-affinity form of the enzyme, leading to product release.

It carries out the reaction nicotinate + 5-phospho-alpha-D-ribose 1-diphosphate + ATP + H2O = nicotinate beta-D-ribonucleotide + ADP + phosphate + diphosphate. Its pathway is cofactor biosynthesis; NAD(+) biosynthesis; nicotinate D-ribonucleotide from nicotinate: step 1/1. Catalyzes the synthesis of beta-nicotinate D-ribonucleotide from nicotinate and 5-phospho-D-ribose 1-phosphate at the expense of ATP. The chain is Nicotinate phosphoribosyltransferase from Sodalis glossinidius (strain morsitans).